The sequence spans 311 residues: E3 ubiquitin-protein ligase RNF126 (311 aa).

Residue alanine 2 is modified to N-acetylalanine. Residue serine 5 is modified to Phosphoserine. The interval 5 to 100 (SPHPGRYFCH…FEIPTFPPGA (96 aa)) is required for interaction with BAG6. Residues cysteine 13, cysteine 16, cysteine 29, and cysteine 32 each contribute to the Zn(2+) site. The C4-type zinc-finger motif lies at 13 to 32 (CHCCSVEIVPRLPDYICPRC). Disordered regions lie at residues 42-64 (EETR…SRPP) and 94-132 (PTFP…ARLT). The span at 47–61 (TENGSAPSTAPTDQS) shows a compositional bias: polar residues. Positions 103–116 (DDGRDPESRRERDH) are enriched in basic and acidic residues. Residues 117–132 (PSRHRYGARQPRARLT) are compositionally biased toward basic residues. Residues 200–304 (TGPPPADKEK…SSSSSSSPSN (105 aa)) form a sufficient for interaction with AICDA region. An RING-type zinc finger spans residues 229 to 270 (CPVCKDDYALGERVRQLPCNHLFHDGCIVPWLEQHDSCPVCR). The tract at residues 277–311 (NTATNPPGLTGVSFSSSSSSSSSSSPSNENATSNS) is disordered. The segment covering 289-311 (SFSSSSSSSSSSSPSNENATSNS) has biased composition (low complexity).

In terms of assembly, interacts with CCDC50, EGFR, FLT3 and SCAMP3. Interacts with BAG6 (via ubiquitin-like domain); required for BAG6-dependent ubiquitination of proteins mislocalized to the cytosol. Interacts with CDKN1A. Interacts with AICDA. Ubiquitinated. May undergo autoubiquitination. As to expression, highly expressed in liver and testis.

Its subcellular location is the cytoplasm. The protein resides in the nucleus. The catalysed reaction is S-ubiquitinyl-[E2 ubiquitin-conjugating enzyme]-L-cysteine + [acceptor protein]-L-lysine = [E2 ubiquitin-conjugating enzyme]-L-cysteine + N(6)-ubiquitinyl-[acceptor protein]-L-lysine.. Its pathway is protein modification; protein ubiquitination. Functionally, E3 ubiquitin-protein ligase that mediates ubiquitination oF target proteins. Depending on the associated E2 ligase, mediates 'Lys-27'-, 'Lys-29'-, 'Lys-48'- and/or 'Lys-63'-linked polyubiquitination of substrates. Part of a BAG6-dependent quality control process ensuring that proteins of the secretory pathway that are mislocalized to the cytosol are degraded by the proteasome. Probably acts by providing the ubiquitin ligase activity associated with the BAG6 complex and be responsible for ubiquitination of the hydrophobic mislocalized proteins and their targeting to the proteasome. May also play a role in the endosomal recycling of IGF2R, the cation-independent mannose-6-phosphate receptor. May play a role in the endosomal sorting and degradation of several membrane receptors including EGFR, FLT3, MET and CXCR4, by mediating their ubiquitination. By ubiquitinating CDKN1A/p21 and targeting it for degradation, may also promote cell proliferation. May monoubiquitinate AICDA. Acts as a regulator of DNA repair by mediating 'Lys-27'- and 'Lys-29'-linked polyubiquitination of MRE11, thereby promoting the exonuclease activity of MRE11. In Homo sapiens (Human), this protein is E3 ubiquitin-protein ligase RNF126.